Consider the following 490-residue polypeptide: ATP synthase subunit alpha 1 (490 aa).

171-178 (GDNGLGKS) is a binding site for ATP.

The protein belongs to the ATPase alpha/beta chains family. As to quaternary structure, F-type ATPases have 2 components, CF(1) - the catalytic core - and CF(0) - the membrane proton channel. CF(1) has five subunits: alpha(3), beta(3), gamma(1), delta(1), epsilon(1). CF(0) has three main subunits: a(1), b(2) and c(9-12). The alpha and beta chains form an alternating ring which encloses part of the gamma chain. CF(1) is attached to CF(0) by a central stalk formed by the gamma and epsilon chains, while a peripheral stalk is formed by the delta and b chains.

It is found in the cell inner membrane. It catalyses the reaction ATP + H2O + 4 H(+)(in) = ADP + phosphate + 5 H(+)(out). Produces ATP from ADP in the presence of a proton gradient across the membrane. The alpha chain is a regulatory subunit. The protein is ATP synthase subunit alpha 1 of Legionella pneumophila (strain Corby).